We begin with the raw amino-acid sequence, 226 residues long: Ribonuclease 3 (226 aa).

Positions 7 to 129 constitute an RNase III domain; it reads LARLSRTLGY…IIGAVYLDAN (123 aa). Mg(2+) is bound at residue glutamate 42. The active site involves aspartate 46. Mg(2+)-binding residues include aspartate 115 and glutamate 118. The active site involves glutamate 118. A DRBM domain is found at 156-226; it reads DPKTILQEYL…AAQILELINK (71 aa).

Belongs to the ribonuclease III family. Homodimer. The cofactor is Mg(2+).

The protein resides in the cytoplasm. The catalysed reaction is Endonucleolytic cleavage to 5'-phosphomonoester.. Its function is as follows. Digests double-stranded RNA. Involved in the processing of primary rRNA transcript to yield the immediate precursors to the large and small rRNAs (23S and 16S). Processes some mRNAs, and tRNAs when they are encoded in the rRNA operon. Processes pre-crRNA and tracrRNA of type II CRISPR loci if present in the organism. In Shewanella denitrificans (strain OS217 / ATCC BAA-1090 / DSM 15013), this protein is Ribonuclease 3.